Reading from the N-terminus, the 290-residue chain is 2-hydroxy-6-oxo-6-(2'-aminophenyl)hexa-2,4-dienoic acid hydrolase (290 aa).

Residues Ser-114, Asp-233, and His-261 contribute to the active site.

The protein belongs to the DmpD/TodF/XylF esterase family. In terms of assembly, homodimer.

It catalyses the reaction (2E,4E)-6-(2-aminophenyl)-2-hydroxy-6-oxohexa-2,4-dienoate + H2O = (2E)-2-hydroxypenta-2,4-dienoate + anthranilate + H(+). Its pathway is xenobiotic degradation; carbazole degradation. Functionally, involved in the degradation of carbazole, a toxic N-heterocyclic aromatic compound containing dibenzopyrrole system. Catalyzes the hydrolytic cleavage of a carbon-carbon bond of 2-hydroxy-6-oxo-6-(2'-aminophenyl)hexa-2,4-dienoic acid (HOPDA) to yield anthranilate. CarC is specific for 2-hydroxy-6-oxo-6-phenylhexa-2,4-dienoic acid (6-phenyl-HODA), and has little activity toward 2-hydroxy-6-oxohepta-2,4-dienoic acid and 2-hydroxymuconic semialdehyde. The effect of the presence of an amino group or hydroxyl group at the 2'-position of phenyl moiety of 6-phenyl-HODA on the enzyme activity is found to be small. This is 2-hydroxy-6-oxo-6-(2'-aminophenyl)hexa-2,4-dienoic acid hydrolase (carC) from Metapseudomonas resinovorans (Pseudomonas resinovorans).